A 369-amino-acid polypeptide reads, in one-letter code: Ferrochelatase (369 aa).

Fe cation is bound by residues His210 and Glu291.

Belongs to the ferrochelatase family.

The protein resides in the cytoplasm. It carries out the reaction heme b + 2 H(+) = protoporphyrin IX + Fe(2+). It participates in porphyrin-containing compound metabolism; protoheme biosynthesis; protoheme from protoporphyrin-IX: step 1/1. Its function is as follows. Catalyzes the ferrous insertion into protoporphyrin IX. In Thioalkalivibrio sulfidiphilus (strain HL-EbGR7), this protein is Ferrochelatase.